A 351-amino-acid chain; its full sequence is sn-glycerol-3-phosphate import ATP-binding protein UgpC (351 aa).

Residues 4 to 235 enclose the ABC transporter domain; sequence IVLDNVRKSY…PASTFVATFI (232 aa). Residue 37 to 44 coordinates ATP; sequence GPSGCGKS.

It belongs to the ABC transporter superfamily. sn-glycerol-3-phosphate importer (TC 3.A.1.1.3) family. The complex is composed of two ATP-binding proteins (UgpC), two transmembrane proteins (UgpA and UgpE) and a solute-binding protein (UgpB).

The protein resides in the cell inner membrane. The enzyme catalyses sn-glycerol 3-phosphate(out) + ATP + H2O = sn-glycerol 3-phosphate(in) + ADP + phosphate + H(+). Its function is as follows. Part of the ABC transporter complex UgpBAEC involved in sn-glycerol-3-phosphate (G3P) import. Responsible for energy coupling to the transport system. This chain is sn-glycerol-3-phosphate import ATP-binding protein UgpC, found in Brucella abortus biovar 1 (strain 9-941).